The primary structure comprises 196 residues: Large ribosomal subunit protein uL10 (196 aa).

The interval 167–196 (EKKAAEGPAEAPQPATEPPAEAPEAPADAE) is disordered.

It belongs to the universal ribosomal protein uL10 family. As to quaternary structure, part of the ribosomal stalk of the 50S ribosomal subunit. The N-terminus interacts with L11 and the large rRNA to form the base of the stalk. The C-terminus forms an elongated spine to which L12 dimers bind in a sequential fashion forming a multimeric L10(L12)X complex.

In terms of biological role, forms part of the ribosomal stalk, playing a central role in the interaction of the ribosome with GTP-bound translation factors. This chain is Large ribosomal subunit protein uL10, found in Mycolicibacterium paratuberculosis (strain ATCC BAA-968 / K-10) (Mycobacterium paratuberculosis).